Reading from the N-terminus, the 462-residue chain is Acetate--CoA ligase [ADP-forming] I subunit alpha (462 aa).

It belongs to the acetate CoA ligase alpha subunit family. As to quaternary structure, heterotetramer of two alpha and two beta subunits.

It localises to the cytoplasm. The catalysed reaction is acetate + ATP + CoA = acetyl-CoA + ADP + phosphate. Activity is dependent on magnesium. In terms of biological role, catalyzes the reversible formation of acetate and ATP from acetyl-CoA by using ADP and phosphate. Can use other substrates such as isobutyryl-CoA, propionyl-CoA and butyryl-CoA, but not indoleacetyl-CoA, phenylacetyl-CoA or succinyl-CoA. Seems to be involved primarily in the conversion of acetyl-CoA to acetate. Participates in the degradation of branched-chain amino acids via branched-chain-acyl-CoA esters. The protein is Acetate--CoA ligase [ADP-forming] I subunit alpha of Pyrococcus furiosus (strain ATCC 43587 / DSM 3638 / JCM 8422 / Vc1).